Consider the following 348-residue polypeptide: MEDLYGILGVDHNASVDEIRRAYRRLARELHPDINPDSADRFKAVTHAYNILSDPEQRQRYDRHVSGGFSSDFNLSDLFQSFFDTSAEFQRGSDLLVNIDIDLKTAIYGGSQVVKIDSLVVCDVCNGTRSEPGYKAEVCFDCNGSGVVRGEVRTTLGNLITQNTCSKCRGNGERIDHPCRRCYGNGSRSAPRDITINIPPGVETGMRIKIPNMGNAGGAMPGDLYVDCKVKEHPYFLRDGQDLYCRLDISLVDALLGTKVKIDSLDGELAVVIPALSQNRDVIRIANKGAVTLRGGKGDLCIVLNVLLMQKLDPEHRALLKKIMPNPPKPKLAKRTSGFFSWLKNKFT.

Residues 3-65 (DLYGILGVDH…EQRQRYDRHV (63 aa)) form the J domain. A CR-type zinc finger spans residues 109 to 191 (GGSQVVKIDS…CYGNGSRSAP (83 aa)). Residues Cys-122, Cys-125, Cys-139, Cys-142, Cys-165, Cys-168, Cys-179, and Cys-182 each contribute to the Zn(2+) site. CXXCXGXG motif repeat units lie at residues 122 to 129 (CDVCNGTR), 139 to 146 (CFDCNGSG), 165 to 172 (CSKCRGNG), and 179 to 186 (CRRCYGNG).

This sequence belongs to the DnaJ family. Homodimer. The cofactor is Zn(2+).

Its subcellular location is the cytoplasm. Its function is as follows. Participates actively in the response to hyperosmotic and heat shock by preventing the aggregation of stress-denatured proteins and by disaggregating proteins, also in an autonomous, DnaK-independent fashion. Unfolded proteins bind initially to DnaJ; upon interaction with the DnaJ-bound protein, DnaK hydrolyzes its bound ATP, resulting in the formation of a stable complex. GrpE releases ADP from DnaK; ATP binding to DnaK triggers the release of the substrate protein, thus completing the reaction cycle. Several rounds of ATP-dependent interactions between DnaJ, DnaK and GrpE are required for fully efficient folding. Also involved, together with DnaK and GrpE, in the DNA replication of plasmids through activation of initiation proteins. This is Chaperone protein DnaJ from Tropheryma whipplei (strain Twist) (Whipple's bacillus).